A 505-amino-acid polypeptide reads, in one-letter code: ATP synthase subunit alpha (505 aa).

170-177 (GDRQTGKT) is a binding site for ATP.

The protein belongs to the ATPase alpha/beta chains family. As to quaternary structure, F-type ATPases have 2 components, CF(1) - the catalytic core - and CF(0) - the membrane proton channel. CF(1) has five subunits: alpha(3), beta(3), gamma(1), delta(1), epsilon(1). CF(0) has four main subunits: a(1), b(1), b'(1) and c(9-12).

The protein localises to the cellular thylakoid membrane. It catalyses the reaction ATP + H2O + 4 H(+)(in) = ADP + phosphate + 5 H(+)(out). Its function is as follows. Produces ATP from ADP in the presence of a proton gradient across the membrane. The alpha chain is a regulatory subunit. The protein is ATP synthase subunit alpha of Synechococcus sp. (strain ATCC 27144 / PCC 6301 / SAUG 1402/1) (Anacystis nidulans).